A 485-amino-acid polypeptide reads, in one-letter code: Forkhead box protein N3 (485 aa).

Residues 1–21 (MGPVMPPSKKPESPGISVSSG) are disordered. 3 positions are modified to phosphoserine: Ser-83, Ser-85, and Ser-97. Residues 86–108 (PVQDLDDDTPPSPAHSDMPYDAR) form a disordered region. The segment at residues 114 to 210 (KPPYSFSCLI…QALKKTPYHS (97 aa)) is a DNA-binding region (fork-head). A disordered region spans residues 315-454 (RTESEPSCGS…DEEMKEAAGS (140 aa)). Residues 338–359 (SSAKSSHARSTSPASDCVSSSS) are compositionally biased toward low complexity. Residues 382-404 (HESHSETEEDDRKCSPKEAKDAL) show a composition bias toward basic and acidic residues. Residues 412 to 424 (QHKKRQHFAKARK) are compositionally biased toward basic residues. Ser-443 is subject to Phosphoserine.

As to quaternary structure, interacts through its C-terminus with the C-terminus of SNW1/SKIP.

It is found in the nucleus. Its function is as follows. Acts as a transcriptional repressor. May be involved in DNA damage-inducible cell cycle arrests (checkpoints). In Sus scrofa (Pig), this protein is Forkhead box protein N3 (FOXN3).